The chain runs to 200 residues: Signal peptidase complex catalytic subunit SEC11 (200 aa).

Topologically, residues 1 to 14 (MFAELAPYLSNPRQ) are cytoplasmic. The chain crosses the membrane as a helical; Signal-anchor for type II membrane protein span at residues 15–33 (TLAQILNFALVLSTAFMGW). Residues 34 to 200 (KALSVYTNSP…MGVMVMLQRE (167 aa)) lie on the Lumenal side of the membrane. Active-site charge relay system residues include Ser53 and His92. The tract at residues 101–129 (GDGGNKSQRRLEREADKPSGPGLSSPLSH) is disordered. The N-linked (GlcNAc...) asparagine glycan is linked to Asn105. A compositionally biased stretch (low complexity) spans 118–128 (PSGPGLSSPLS). Catalysis depends on Asp142, which acts as the Charge relay system. Positions 186–197 (VLLGIMGVMVML) are C-terminal short (CTS) helix.

It belongs to the peptidase S26B family. In terms of assembly, component of the signal peptidase complex (SPC) composed of a catalytic subunit SEC11 and three accessory subunits SPC1, SPC2 and SPC3. The complex induces a local thinning of the ER membrane which is used to measure the length of the signal peptide (SP) h-region of protein substrates. This ensures the selectivity of the complex towards h-regions shorter than 18-20 amino acids. SPC associates with the translocon complex.

The protein resides in the endoplasmic reticulum membrane. It carries out the reaction Cleavage of hydrophobic, N-terminal signal or leader sequences from secreted and periplasmic proteins.. Catalytic component of the signal peptidase complex (SPC) which catalyzes the cleavage of N-terminal signal sequences from nascent proteins as they are translocated into the lumen of the endoplasmic reticulum. Specifically cleaves N-terminal signal peptides that contain a hydrophobic alpha-helix (h-region) shorter than 18-20 amino acids. The sequence is that of Signal peptidase complex catalytic subunit SEC11 (SEC11) from Arthroderma otae (strain ATCC MYA-4605 / CBS 113480) (Microsporum canis).